The following is a 559-amino-acid chain: Fanconi-associated nuclease 1 homolog (559 aa).

Positions 386, 507, 522, and 523 each coordinate Mn(2+). Residues 443–555 (DGSYRDAIRC…MPVAVCYVRW (113 aa)) enclose the VRR-NUC domain.

It belongs to the FAN1 family. The cofactor is Mn(2+). Mg(2+) serves as cofactor.

The catalysed reaction is Hydrolytically removes 5'-nucleotides successively from the 3'-hydroxy termini of 3'-hydroxy-terminated oligonucleotides.. Functionally, nuclease required for the repair of DNA interstrand cross-links (ICL). Acts as a 5'-3' exonuclease that anchors at a cut end of DNA and cleaves DNA successively at every third nucleotide, allowing to excise an ICL from one strand through flanking incisions. Also has endonuclease activity toward 5'-flaps. The polypeptide is Fanconi-associated nuclease 1 homolog (Pseudomonas aeruginosa (strain ATCC 15692 / DSM 22644 / CIP 104116 / JCM 14847 / LMG 12228 / 1C / PRS 101 / PAO1)).